Consider the following 270-residue polypeptide: Meiotic recombination 1 protein (270 aa).

The region spanning Glu191 to Pro225 is the KH domain.

Functionally, required for chromosome pairing and genetic recombination. MER1 may function to bring the axial elements of the synaptonemal complex corresponding to homologous chromosomes together by initiating recombination. MER1 might be responsible for regulating the MER2 gene and/or gene product. This Saccharomyces cerevisiae (strain ATCC 204508 / S288c) (Baker's yeast) protein is Meiotic recombination 1 protein (MER1).